Reading from the N-terminus, the 338-residue chain is Ketol-acid reductoisomerase (NADP(+)) (338 aa).

Positions 1 to 181 (MKVYYDKDAD…GGTKGGVIET (181 aa)) constitute a KARI N-terminal Rossmann domain. NADP(+) contacts are provided by residues 24–27 (YGSQ), arginine 47, and serine 52. Residue histidine 107 is part of the active site. Residue glycine 133 coordinates NADP(+). Residues 182-327 (NFREETETDL…SQLRAMMPWI (146 aa)) enclose the KARI C-terminal knotted domain. 4 residues coordinate Mg(2+): aspartate 190, glutamate 194, glutamate 226, and glutamate 230. Position 251 (serine 251) interacts with substrate.

Belongs to the ketol-acid reductoisomerase family. The cofactor is Mg(2+).

The enzyme catalyses (2R)-2,3-dihydroxy-3-methylbutanoate + NADP(+) = (2S)-2-acetolactate + NADPH + H(+). The catalysed reaction is (2R,3R)-2,3-dihydroxy-3-methylpentanoate + NADP(+) = (S)-2-ethyl-2-hydroxy-3-oxobutanoate + NADPH + H(+). Its pathway is amino-acid biosynthesis; L-isoleucine biosynthesis; L-isoleucine from 2-oxobutanoate: step 2/4. It participates in amino-acid biosynthesis; L-valine biosynthesis; L-valine from pyruvate: step 2/4. In terms of biological role, involved in the biosynthesis of branched-chain amino acids (BCAA). Catalyzes an alkyl-migration followed by a ketol-acid reduction of (S)-2-acetolactate (S2AL) to yield (R)-2,3-dihydroxy-isovalerate. In the isomerase reaction, S2AL is rearranged via a Mg-dependent methyl migration to produce 3-hydroxy-3-methyl-2-ketobutyrate (HMKB). In the reductase reaction, this 2-ketoacid undergoes a metal-dependent reduction by NADPH to yield (R)-2,3-dihydroxy-isovalerate. The polypeptide is Ketol-acid reductoisomerase (NADP(+)) (Methylobacillus flagellatus (strain ATCC 51484 / DSM 6875 / VKM B-1610 / KT)).